The chain runs to 179 residues: SCAN domain-containing protein 1 (179 aa).

Residues 1–107 are disordered; the sequence is MAATEPILAT…AGSRLGPETF (107 aa). Residues 52–80 are compositionally biased toward low complexity; sequence SPNAAVPEAIPTPRAAASAALELPLGPAP. Residues 108–166 enclose the SCAN box domain; it reads RQRFRQFRYQDAAGPREAFRQLRELSRQWLRPDIRTKEQIVEMLVQEQLLAILPEAARA.

In terms of assembly, interacts with ZNF202.

The protein resides in the nucleus. May regulate transcriptional activity. The sequence is that of SCAN domain-containing protein 1 (SCAND1) from Pan paniscus (Pygmy chimpanzee).